Consider the following 1132-residue polypeptide: Protein CROWDED NUCLEI 1 (1132 aa).

Residues 1-31 (MSTPLKVWQRWSTPTKATNPDSNGSSHGTGL) form a disordered region. Over residues 10-28 (RWSTPTKATNPDSNGSSHG) the composition is skewed to polar residues. The stretch at 73 to 714 (LLIEKKEWSS…KKLKEQREQF (642 aa)) forms a coiled coil. Short sequence motifs (nuclear localization signal) lie at residues 379–386 (EKREAEWK) and 693–700 (IRKDVDDL). Ser774 and Ser803 each carry phosphoserine. The segment covering 849–859 (AESETGTKEVE) has biased composition (basic and acidic residues). Disordered stretches follow at residues 849 to 871 (AESE…DQSD), 883 to 909 (SLSN…TRSV), 924 to 1039 (INLY…VQQE), and 1061 to 1132 (GVST…FLTT). The segment covering 861–871 (TNVNSDGDQSD) has biased composition (polar residues). A phosphoserine mark is found at Ser865 and Ser883. Basic residues predominate over residues 895 to 907 (MKGKGKARTRRTR). Ser908 is subject to Phosphoserine. Phosphoserine is present on residues Ser1093, Ser1105, and Ser1112. The span at 1095–1105 (DVNKTPLRADS) shows a compositional bias: basic and acidic residues.

Belongs to the CRWN family. In terms of assembly, core component of the LINC complex which is composed of inner nuclear membrane SUN domain-containing proteins coupled to outer nuclear membrane WIP and WIT proteins. The LINC complex also involves nucleoskeletal proteins CRWN/LINC and possibly KAKU4 and the cytoskeletal myosin KAKU1. Interacts with SUN1 and SUN2. Binds to KAKU4. In terms of tissue distribution, expressed at low levels in roots, leaves, flowers and flower stalks.

It localises to the nucleus membrane. The protein localises to the nucleus. Its subcellular location is the nucleoplasm. It is found in the nucleus lamina. In terms of biological role, component of SUN-protein-containing multivariate complexes also called LINC complexes which link the nucleoskeleton and cytoskeleton by providing versatile outer nuclear membrane attachment sites for cytoskeletal filaments. Required for nucleus structure organization (e.g. size and shape). In Arabidopsis thaliana (Mouse-ear cress), this protein is Protein CROWDED NUCLEI 1.